Here is a 468-residue protein sequence, read N- to C-terminus: Cysteine--tRNA ligase (468 aa).

Position 33 (Cys-33) interacts with Zn(2+). The short motif at 35-45 is the 'HIGH' region element; sequence ATVQGLPHIGH. 3 residues coordinate Zn(2+): Cys-211, His-236, and Glu-240. The 'KMSKS' region signature appears at 267-271; it reads KMSKS. Position 270 (Lys-270) interacts with ATP.

It belongs to the class-I aminoacyl-tRNA synthetase family. In terms of assembly, monomer. It depends on Zn(2+) as a cofactor.

The protein resides in the cytoplasm. It carries out the reaction tRNA(Cys) + L-cysteine + ATP = L-cysteinyl-tRNA(Cys) + AMP + diphosphate. This chain is Cysteine--tRNA ligase, found in Mycolicibacterium paratuberculosis (strain ATCC BAA-968 / K-10) (Mycobacterium paratuberculosis).